The primary structure comprises 513 residues: Xylose import ATP-binding protein XylG (513 aa).

2 consecutive ABC transporter domains span residues 5–242 and 259–505; these read LEMK…VGRE and LRIE…LRSE. 37-44 is an ATP binding site; the sequence is GENGSGKS.

It belongs to the ABC transporter superfamily. Xylose importer (TC 3.A.1.2.4) family. The complex is composed of two ATP-binding proteins (XylG), two transmembrane proteins (XylH) and a solute-binding protein (XylF).

The protein resides in the cell inner membrane. The enzyme catalyses D-xylose(out) + ATP + H2O = D-xylose(in) + ADP + phosphate + H(+). In terms of biological role, part of the ABC transporter complex XylFGH involved in xylose import. Responsible for energy coupling to the transport system. This chain is Xylose import ATP-binding protein XylG, found in Escherichia coli O6:K15:H31 (strain 536 / UPEC).